Reading from the N-terminus, the 374-residue chain is Potassium channel subfamily K member 9 (374 aa).

The Cytoplasmic portion of the chain corresponds to 1–8 (MKRQNVRT). Residues 9–29 (LSLIVCTFTYLLVGAAVFDAL) traverse the membrane as a helical segment. The Extracellular portion of the chain corresponds to 30 to 88 (ESDHEMREEEKLKAEEIRIKGKYNISSEDYRQLELVILQSEPHRAGVQWKFAGSFYFAI). Asn53 carries an N-linked (GlcNAc...) asparagine glycan. The segment at residues 89–101 (TVITTIGYGHAAP) is an intramembrane region (pore-forming). K(+) is bound by residues Thr93, Ile94, Gly95, and Tyr96. A selectivity filter 1 region spans residues 93-98 (TIGYGH). Topologically, residues 102–107 (GTDAGK) are extracellular. The helical transmembrane segment at 108 to 128 (AFCMFYAVLGIPLTLVMFQSL) threads the bilayer. The Cytoplasmic portion of the chain corresponds to 129-158 (GERMNTFVRYLLKRIKKCCGMRNTDVSMEN). Residues 159 to 179 (MVTVGFFSCMGTLCIGAAAFS) traverse the membrane as a helical segment. The Extracellular segment spans residues 180–194 (QCEEWSFFHAYYYCF). The pore-forming intramembrane region spans 195–207 (ITLTTIGFGDYVA). K(+) is bound by residues Thr199, Ile200, Gly201, and Phe202. A selectivity filter 2 region spans residues 199–204 (TIGFGD). The Extracellular portion of the chain corresponds to 208–218 (LQTKGALQKKP). A helical membrane pass occupies residues 219 to 239 (LYVAFSFMYILVGLTVIGAFL). Residues 240-374 (NLVVLRFLTM…QRLMKRRKSV (135 aa)) lie on the Cytoplasmic side of the membrane. The segment at 243 to 248 (VLRFLT) is X-gate.

The protein belongs to the two pore domain potassium channel (TC 1.A.1.8) family. As to quaternary structure, homodimer. Heterodimer with KCNK1. Heterodimer with KCNK3. In terms of tissue distribution, mainly found in the cerebellum. Also found in adrenal gland, kidney and lung.

It is found in the cell membrane. The protein resides in the mitochondrion inner membrane. It localises to the cell projection. The protein localises to the dendrite. It catalyses the reaction K(+)(in) = K(+)(out). The enzyme catalyses Na(+)(in) = Na(+)(out). Inhibited by extracellular acidification adopting a nonconductive conformation at pH 6.0. Inhibited by phorbol 12-myristate 13-acetate (PMA). K(+) channel that conducts voltage-dependent outward rectifying currents upon membrane depolarization. Voltage sensing is coupled to K(+) electrochemical gradient in an 'ion flux gating' mode where outward but not inward ion flow opens the gate. Changes ion selectivity and becomes permeable to Na(+) ions in response to extracellular acidification. Protonation of the pH sensor His-98 stabilizes C-type inactivation conformation likely converting the channel from outward K(+)-conducting, to inward Na(+)-conducting to nonconductive state. Homo- and heterodimerizes to form functional channels with distinct regulatory and gating properties. Allows K(+) currents with fast-gating kinetics important for the repolarization and hyperpolarization phases of action potentials. In granule neurons, hyperpolarizes the resting membrane potential to limit intrinsic neuronal excitability, but once the action potential threshold is reached, supports high-frequency action potential firing and increased neuronal excitability. Homomeric and/or heteromeric KCNK3:KCNK9 channels operate in cerebellar granule cells, whereas heteromeric KCNK1:KCNK9 enables currents in hippocampal dentate gyrus granule neurons. Dispensable for central chemosensory respiration i.e. breathing controlled by brainstem CO2/pH, it rather conducts pH-sensitive currents and controls the firing rate of serotonergic raphe neurons involved in potentiation of the respiratory chemoreflex. In retinal ganglion cells, mediates outward currents that regulate action potentials in response to acidification of the synaptic cleft. Involved in transmission of image-forming and nonimage-forming visual information in the retina. In adrenal gland, contributes to the maintenance of a hyperpolarized resting membrane potential of aldosterone-producing cells at zona glomerulosa and limits aldosterone release as part of a regulatory mechanism that controls arterial blood pressure and electrolyte homeostasis. The polypeptide is Potassium channel subfamily K member 9 (Homo sapiens (Human)).